The primary structure comprises 623 residues: Glutathione import ATP-binding protein GsiA (623 aa).

ABC transporter domains are found at residues 15 to 269 and 314 to 564; these read VENL…RALL and LRVR…RKLL. ATP contacts are provided by residues 49–56 and 357–364; these read GESGSGKS.

Belongs to the ABC transporter superfamily. Glutathione importer (TC 3.A.1.5.11) family. As to quaternary structure, the complex is composed of two ATP-binding proteins (GsiA), two transmembrane proteins (GsiC and GsiD) and a solute-binding protein (GsiB).

The protein resides in the cell inner membrane. It catalyses the reaction glutathione(out) + ATP + H2O = glutathione(in) + ADP + phosphate + H(+). Part of the ABC transporter complex GsiABCD involved in glutathione import. Responsible for energy coupling to the transport system. The chain is Glutathione import ATP-binding protein GsiA from Shigella flexneri.